The sequence spans 411 residues: MQCSWKAVLLLALASIAIQYTAIRTFTAKSFHTCPGLTETGLAERLCEEGPTFSYNLSRKTHVLILATTRSGSSFVGQLFNQHMDVFYLFEPLYHVQNTLIPRFTQGKSPADRRVMLGASRDLLRSLYDCDLYFLENYIKPPPVNHTTDRVFRRGASRVLCSRPVCDPPGASDLILEEGDCVRKCGLLNLTLAAEACRERSHVAIKTVRVPEVNDLRALVEDPRLNLKVIQLVRDPRGILASRSETFRDTYRLWRLWYGTGRKPYNLDVTQLTTVCEDFSSSVSTGLMRPSWLKGKYMLVRYEDLARNPMKKTEEIYEFLGIPLDSHVARWIQNNTRGDPTLGKHKYGTVRNSAATAEKWRFRLSYDIVAFAQNACQHVLAQLGYKMATSEEELKNPAISLVEERDFRPFL.

Met-1 is a topological domain (cytoplasmic). The chain crosses the membrane as a helical; Signal-anchor for type II membrane protein span at residues 2-23 (QCSWKAVLLLALASIAIQYTAI). The Lumenal segment spans residues 24–411 (RTFTAKSFHT…VEERDFRPFL (388 aa)). The N-linked (GlcNAc...) asparagine glycan is linked to Asn-56. 69 to 75 (TRSGSSF) is a binding site for 3'-phosphoadenylyl sulfate. 2 N-linked (GlcNAc...) asparagine glycosylation sites follow: Asn-145 and Asn-189. 234–242 (RDPRGILAS) contacts 3'-phosphoadenylyl sulfate. Asn-334 is a glycosylation site (N-linked (GlcNAc...) asparagine). A Cell attachment site motif is present at residues 337-339 (RGD).

It belongs to the sulfotransferase 1 family. Gal/GlcNAc/GalNAc subfamily.

The protein localises to the golgi apparatus membrane. The catalysed reaction is 3'-phosphoadenylyl sulfate + keratan = adenosine 3',5'-bisphosphate + keratan 6'-sulfate.. Its pathway is glycan metabolism. Its function is as follows. Sulfotransferase that utilizes 3'-phospho-5'-adenylyl sulfate (PAPS) as sulfonate donor to catalyze the transfer of sulfate to position 6 of internal galactose (Gal) residues of keratan. Cooperates with B4GALT4 and B3GNT7 glycosyltransferases and CHST6 sulfotransferase to construct and elongate disulfated disaccharide unit [-&gt;3(6-sulfoGalbeta)1-&gt;4(6-sulfoGlcNAcbeta)1-&gt;] within keratan sulfate polymer. Has a preference for sulfating keratan sulfate, but it also transfers sulfate to the unsulfated polymer. Involved in biosynthesis of phosphacan, a major keratan sulfate proteoglycan in the developing brain. Involved in biosynthesis of 6-sulfoGalbeta-containing O-linked glycans in high endothelial venules of lymph nodes. May act in a synergistic manner with CHST4 to generate sialyl 6',6-disulfo Lewis X motif, a recognition determinant for immune cell receptors implicated in leukocyte trafficking. Catalyzes sulfation of N-acetyllactosamine (LacNAc) oligosaccharides with highest efficiency for sialylated LacNAc structures. In Rattus norvegicus (Rat), this protein is Carbohydrate sulfotransferase 1 (Chst1).